The following is a 280-amino-acid chain: 2-dehydro-3-deoxyphosphooctonate aldolase 2 (280 aa).

This sequence belongs to the KdsA family.

It localises to the cytoplasm. It carries out the reaction D-arabinose 5-phosphate + phosphoenolpyruvate + H2O = 3-deoxy-alpha-D-manno-2-octulosonate-8-phosphate + phosphate. It participates in carbohydrate biosynthesis; 3-deoxy-D-manno-octulosonate biosynthesis; 3-deoxy-D-manno-octulosonate from D-ribulose 5-phosphate: step 2/3. It functions in the pathway bacterial outer membrane biogenesis; lipopolysaccharide biosynthesis. This Pseudomonas putida (strain ATCC 47054 / DSM 6125 / CFBP 8728 / NCIMB 11950 / KT2440) protein is 2-dehydro-3-deoxyphosphooctonate aldolase 2 (kdsA2).